Here is a 63-residue protein sequence, read N- to C-terminus: uncharacterized protein (63 aa).

This is an uncharacterized protein from Bdellovibrio bacteriovorus (Bacteriophage phiMH2K).